The following is a 501-amino-acid chain: Beta-glucosidase 25 (501 aa).

Residues M1–A19 form the signal peptide. Q39 contributes to the a beta-D-glucoside binding site. N107 is a glycosylation site (N-linked (GlcNAc...) asparagine). Residues H140 and N185–E186 each bind a beta-D-glucoside. The Proton donor role is filled by E186. A disulfide bridge links C205 with C213. A beta-D-glucoside is bound by residues Y329, E402, W452, E459–W460, and F468. Residue E402 is the Nucleophile of the active site. Residue N478 is glycosylated (N-linked (GlcNAc...) asparagine).

The protein belongs to the glycosyl hydrolase 1 family.

The enzyme catalyses Hydrolysis of terminal, non-reducing beta-D-glucosyl residues with release of beta-D-glucose.. This is Beta-glucosidase 25 (BGLU25) from Oryza sativa subsp. japonica (Rice).